A 663-amino-acid chain; its full sequence is LEAF RUST 10 DISEASE-RESISTANCE LOCUS RECEPTOR-LIKE PROTEIN KINASE-like 1.4 (663 aa).

Residues 1–25 form the signal peptide; it reads MYYPLSSSLMFFILFSLFYHLPCES. The Extracellular segment spans residues 26–241; that stretch reads SKCESLFQCG…TSLSIGAKAG (216 aa). Asparagine 36, asparagine 64, asparagine 106, asparagine 137, and asparagine 208 each carry an N-linked (GlcNAc...) asparagine glycan. A helical membrane pass occupies residues 242 to 262; sequence IAVASVSGLAILLLAGLFLCI. Over 263-663 the chain is Cytoplasmic; that stretch reads RRRRKTQDAQ…TSSSDTAASL (401 aa). The interval 282–304 is disordered; that stretch reads SYSSRDTSRNPTSTTISSSSNHS. Over residues 290–304 the composition is skewed to low complexity; sequence RNPTSTTISSSSNHS. Positions 334-609 constitute a Protein kinase domain; sequence ENFSRELGDG…DEIVEILRGI (276 aa). ATP-binding positions include 340–348 and lysine 362; that span reads LGDGGFGTV. The Proton acceptor role is filled by aspartate 458. The interval 637–663 is disordered; sequence LLRNSVPPPISPETDKWTSSSDTAASL. Residues 653-663 are compositionally biased toward polar residues; that stretch reads WTSSSDTAASL.

It belongs to the protein kinase superfamily. Ser/Thr protein kinase family.

It localises to the cell membrane. The catalysed reaction is L-seryl-[protein] + ATP = O-phospho-L-seryl-[protein] + ADP + H(+). The enzyme catalyses L-threonyl-[protein] + ATP = O-phospho-L-threonyl-[protein] + ADP + H(+). The protein is LEAF RUST 10 DISEASE-RESISTANCE LOCUS RECEPTOR-LIKE PROTEIN KINASE-like 1.4 of Arabidopsis thaliana (Mouse-ear cress).